The sequence spans 258 residues: Indole-3-glycerol phosphate synthase (258 aa).

It belongs to the TrpC family.

The catalysed reaction is 1-(2-carboxyphenylamino)-1-deoxy-D-ribulose 5-phosphate + H(+) = (1S,2R)-1-C-(indol-3-yl)glycerol 3-phosphate + CO2 + H2O. It participates in amino-acid biosynthesis; L-tryptophan biosynthesis; L-tryptophan from chorismate: step 4/5. The polypeptide is Indole-3-glycerol phosphate synthase (Campylobacter fetus subsp. fetus (strain 82-40)).